Reading from the N-terminus, the 828-residue chain is USP6 N-terminal-like protein (828 aa).

At Met1 the chain carries N-acetylmethionine. Positions 100–292 (GIPLQLRGEV…RIWDIYIFEG (193 aa)) constitute a Rab-GAP TBC domain. Over residues 355 to 367 (DLPEPGKEDEYPK) the composition is skewed to basic and acidic residues. Residues 355–722 (DLPEPGKEDE…NSGSPKNGKL (368 aa)) form a disordered region. A phosphoserine mark is found at Ser391, Ser396, and Ser400. Positions 434–451 (KSVEEESKKLKDEADFQR) are enriched in basic and acidic residues. Over residues 465-478 (NHAAANQNSNATSN) the composition is skewed to low complexity. Composition is skewed to basic and acidic residues over residues 498–508 (RTAKYTMEGKG) and 535–544 (KALDAEDGKR). Phosphoserine is present on residues Ser546 and Ser549. Tyr582 is subject to Phosphotyrosine. At Ser585 the chain carries Phosphoserine. The segment covering 592–603 (PSSSPSKVSNKF) has biased composition (polar residues). Ser642, Ser655, Ser659, Ser676, and Ser680 each carry phosphoserine. 2 stretches are compositionally biased toward polar residues: residues 648–666 (TANSSFASPQFSPGTQLNP) and 673–683 (STLSVSASPEK). Low complexity predominate over residues 686 to 697 (SRPSPLVLPSSR). Ser716 is modified (phosphoserine). Tyr729 bears the Phosphotyrosine mark. Residues 789–817 (KASPAAEDASPSGYPYSGPPPPAYHYRNR) form a disordered region.

Interacts with EPS8. In terms of tissue distribution, widely expressed.

It localises to the golgi apparatus. Its subcellular location is the cytoplasmic vesicle. Its function is as follows. Acts as a GTPase-activating protein for RAB5A and RAB43. Involved in receptor trafficking. In complex with EPS8 inhibits internalization of EGFR. Involved in retrograde transport from the endocytic pathway to the Golgi apparatus. Involved in the transport of Shiga toxin from early and recycling endosomes to the trans-Golgi network. Required for structural integrity of the Golgi complex. This is USP6 N-terminal-like protein (USP6NL) from Homo sapiens (Human).